The primary structure comprises 416 residues: Serine hydroxymethyltransferase (416 aa).

(6S)-5,6,7,8-tetrahydrofolate-binding positions include Leu121 and 125–127 (GHL). The residue at position 229 (Lys229) is an N6-(pyridoxal phosphate)lysine.

It belongs to the SHMT family. In terms of assembly, homodimer. It depends on pyridoxal 5'-phosphate as a cofactor.

The protein resides in the cytoplasm. It catalyses the reaction (6R)-5,10-methylene-5,6,7,8-tetrahydrofolate + glycine + H2O = (6S)-5,6,7,8-tetrahydrofolate + L-serine. It participates in one-carbon metabolism; tetrahydrofolate interconversion. Its pathway is amino-acid biosynthesis; glycine biosynthesis; glycine from L-serine: step 1/1. In terms of biological role, catalyzes the reversible interconversion of serine and glycine with tetrahydrofolate (THF) serving as the one-carbon carrier. This reaction serves as the major source of one-carbon groups required for the biosynthesis of purines, thymidylate, methionine, and other important biomolecules. Also exhibits THF-independent aldolase activity toward beta-hydroxyamino acids, producing glycine and aldehydes, via a retro-aldol mechanism. This Dechloromonas aromatica (strain RCB) protein is Serine hydroxymethyltransferase.